Here is a 469-residue protein sequence, read N- to C-terminus: Argininosuccinate lyase (469 aa).

Belongs to the lyase 1 family. Argininosuccinate lyase subfamily.

The protein localises to the cytoplasm. The enzyme catalyses 2-(N(omega)-L-arginino)succinate = fumarate + L-arginine. It participates in amino-acid biosynthesis; L-arginine biosynthesis; L-arginine from L-ornithine and carbamoyl phosphate: step 3/3. This chain is Argininosuccinate lyase, found in Burkholderia lata (strain ATCC 17760 / DSM 23089 / LMG 22485 / NCIMB 9086 / R18194 / 383).